Here is a 332-residue protein sequence, read N- to C-terminus: Beta-hexosaminidase (332 aa).

Substrate is bound by residues Asp62, Arg70, Arg131, and 161–162 (KH). His174 serves as the catalytic Proton donor/acceptor. Asp244 serves as the catalytic Nucleophile.

It belongs to the glycosyl hydrolase 3 family. NagZ subfamily.

The protein localises to the cytoplasm. The catalysed reaction is Hydrolysis of terminal non-reducing N-acetyl-D-hexosamine residues in N-acetyl-beta-D-hexosaminides.. Its pathway is cell wall biogenesis; peptidoglycan recycling. Functionally, plays a role in peptidoglycan recycling by cleaving the terminal beta-1,4-linked N-acetylglucosamine (GlcNAc) from peptide-linked peptidoglycan fragments, giving rise to free GlcNAc, anhydro-N-acetylmuramic acid and anhydro-N-acetylmuramic acid-linked peptides. This chain is Beta-hexosaminidase, found in Pseudomonas aeruginosa (strain LESB58).